We begin with the raw amino-acid sequence, 231 residues long: Large ribosomal subunit protein uL1 (231 aa).

This sequence belongs to the universal ribosomal protein uL1 family. In terms of assembly, part of the 50S ribosomal subunit.

In terms of biological role, binds directly to 23S rRNA. The L1 stalk is quite mobile in the ribosome, and is involved in E site tRNA release. Protein L1 is also a translational repressor protein, it controls the translation of the L11 operon by binding to its mRNA. The polypeptide is Large ribosomal subunit protein uL1 (Staphylococcus epidermidis (strain ATCC 35984 / DSM 28319 / BCRC 17069 / CCUG 31568 / BM 3577 / RP62A)).